Consider the following 299-residue polypeptide: Non-structural protein V (299 aa).

Disordered regions lie at residues 56–79, 137–186, and 205–229; these read DHQDISKPCFPAAGPGKSSMSRCH, DGVE…ETVE, and KAGKTLVVPPIPSQERPTASEKPIK. The segment covering 137 to 160 has biased composition (acidic residues); the sequence is DGVEVWGGDEESENSDVDSGEPDP. Zn(2+) is bound by residues His232, Cys251, Cys255, Cys267, Cys269, Cys272, Cys276, and Cys279.

The protein belongs to the paramyxoviruses V protein family. In terms of assembly, interacts with host IFIH1/MDA5 and DHX58/LGP2. Interacts with host TYK2; this interaction inhibits the type I interferon signaling pathway.

It localises to the host cytoplasm. Plays an essential role in the inhibition of host immune response. Prevents the establishment of cellular antiviral state by blocking interferon-alpha/beta (IFN-alpha/beta) production and signaling pathway. Interacts with host IFIH1/MDA5 and DHX58/LGP2 to inhibit the transduction pathway involved in the activation of IFN-beta promoter, thus protecting the virus against cell antiviral state. Blocks the type I interferon signaling pathway by interacting with host TYK2 and thereby inhibiting downstream STAT1 and STAT2 phosphorylation. This chain is Non-structural protein V (P/V), found in Bos indicus (Zebu).